The sequence spans 264 residues: Orotidine 5'-phosphate decarboxylase (264 aa).

Substrate is bound by residues D37, 59–61 (KTH), 91–100 (DRKFADIGNT), Y217, and R235. K93 (proton donor) is an active-site residue.

The protein belongs to the OMP decarboxylase family.

It catalyses the reaction orotidine 5'-phosphate + H(+) = UMP + CO2. The protein operates within pyrimidine metabolism; UMP biosynthesis via de novo pathway; UMP from orotate: step 2/2. This is Orotidine 5'-phosphate decarboxylase (URA3) from Torulaspora delbrueckii (Yeast).